The chain runs to 509 residues: ATP synthase subunit alpha (509 aa).

169 to 176 (GDRQTGKT) is a binding site for ATP.

This sequence belongs to the ATPase alpha/beta chains family. F-type ATPases have 2 components, CF(1) - the catalytic core - and CF(0) - the membrane proton channel. CF(1) has five subunits: alpha(3), beta(3), gamma(1), delta(1), epsilon(1). CF(0) has three main subunits: a(1), b(2) and c(9-12). The alpha and beta chains form an alternating ring which encloses part of the gamma chain. CF(1) is attached to CF(0) by a central stalk formed by the gamma and epsilon chains, while a peripheral stalk is formed by the delta and b chains.

It localises to the cell inner membrane. The catalysed reaction is ATP + H2O + 4 H(+)(in) = ADP + phosphate + 5 H(+)(out). In terms of biological role, produces ATP from ADP in the presence of a proton gradient across the membrane. The alpha chain is a regulatory subunit. In Rhizobium johnstonii (strain DSM 114642 / LMG 32736 / 3841) (Rhizobium leguminosarum bv. viciae), this protein is ATP synthase subunit alpha.